A 232-amino-acid polypeptide reads, in one-letter code: 5'-methylthioadenosine/S-adenosylhomocysteine nucleosidase (232 aa).

Residue Glu-12 is the Proton acceptor of the active site. Substrate is bound by residues Gly-78, Met-153, and 174 to 175 (ME). Asp-198 (proton donor) is an active-site residue.

The protein belongs to the PNP/UDP phosphorylase family. MtnN subfamily.

The catalysed reaction is S-adenosyl-L-homocysteine + H2O = S-(5-deoxy-D-ribos-5-yl)-L-homocysteine + adenine. The enzyme catalyses S-methyl-5'-thioadenosine + H2O = 5-(methylsulfanyl)-D-ribose + adenine. It catalyses the reaction 5'-deoxyadenosine + H2O = 5-deoxy-D-ribose + adenine. It participates in amino-acid biosynthesis; L-methionine biosynthesis via salvage pathway; S-methyl-5-thio-alpha-D-ribose 1-phosphate from S-methyl-5'-thioadenosine (hydrolase route): step 1/2. In terms of biological role, catalyzes the irreversible cleavage of the glycosidic bond in both 5'-methylthioadenosine (MTA) and S-adenosylhomocysteine (SAH/AdoHcy) to adenine and the corresponding thioribose, 5'-methylthioribose and S-ribosylhomocysteine, respectively. Also cleaves 5'-deoxyadenosine, a toxic by-product of radical S-adenosylmethionine (SAM) enzymes, into 5-deoxyribose and adenine. The sequence is that of 5'-methylthioadenosine/S-adenosylhomocysteine nucleosidase from Geobacillus sp. (strain WCH70).